Here is a 262-residue protein sequence, read N- to C-terminus: Hydroxyethylthiazole kinase (262 aa).

Residue Met-50 participates in substrate binding. Residues Arg-125 and Thr-171 each contribute to the ATP site. Gly-198 provides a ligand contact to substrate.

This sequence belongs to the Thz kinase family. Mg(2+) is required as a cofactor.

It carries out the reaction 5-(2-hydroxyethyl)-4-methylthiazole + ATP = 4-methyl-5-(2-phosphooxyethyl)-thiazole + ADP + H(+). It participates in cofactor biosynthesis; thiamine diphosphate biosynthesis; 4-methyl-5-(2-phosphoethyl)-thiazole from 5-(2-hydroxyethyl)-4-methylthiazole: step 1/1. In terms of biological role, catalyzes the phosphorylation of the hydroxyl group of 4-methyl-5-beta-hydroxyethylthiazole (THZ). This is Hydroxyethylthiazole kinase from Escherichia coli (strain K12 / MC4100 / BW2952).